The sequence spans 353 residues: Cyanuric acid amidohydrolase (353 aa).

The RU A stretch occupies residues 1-90 (MSSTALYTVP…NIFVRDERQY (90 aa)). Residues Arg49 and 69-70 (SG) contribute to the substrate site. Positions 96-231 (GLVTAVGRTR…CHILVVAESD (136 aa)) are RU B. Residue Lys145 is part of the active site. Residues Arg177 and 214–215 (SS) each bind substrate. Ser214 (nucleophile) is an active-site residue. Residues 237-353 (LRAAHTAMRD…TANATGEASR (117 aa)) are RU C. Glu275 is a Mg(2+) binding site. Residues Arg302 and 321–322 (SG) contribute to the substrate site. The Mg(2+) site is built by Ala324, Gln327, Gly328, Pro329, and Gly332.

This sequence belongs to the cyclic amide hydrolase (CyAH) family. Homotetramer.

It catalyses the reaction cyanurate + H2O = 1-carboxybiuret + H(+). Its pathway is xenobiotic degradation; atrazine degradation; biuret from cyanurate: step 1/1. With respect to regulation, inhibited by barbituric acid. Responsible for the hydrolysis of cyanuric acid, an intermediate formed during catabolism of s-triazine based compounds in herbicides such as atrazine and polymers such as melamine. Catalyzes the hydrolytic opening of the s-triazine ring of cyanuric acid (2,4,6-trihydroxy-s-triazine) to yield carbon dioxide and carboxybiuret, which spontaneously decarboxylates to biuret. Required for growth on melamine or cyanuric acid as sole nitrogen source. The chain is Cyanuric acid amidohydrolase from Rhodococcus sp.